We begin with the raw amino-acid sequence, 361 residues long: Phospho-N-acetylmuramoyl-pentapeptide-transferase (361 aa).

10 helical membrane-spanning segments follow: residues 21-41 (YLTI…LMLG), 69-89 (VGTP…SILI), 93-113 (WSNI…AIGF), 131-151 (SIKF…IILI), 168-188 (IILP…IVGS), 200-220 (GLAI…AYFS), 240-260 (LFII…FNAY), 264-284 (IFMG…IAIL), 289-309 (ILLF…IIQV), and 338-358 (KIIV…LASI).

It belongs to the glycosyltransferase 4 family. MraY subfamily. Requires Mg(2+) as cofactor.

It localises to the cell inner membrane. The catalysed reaction is UDP-N-acetyl-alpha-D-muramoyl-L-alanyl-gamma-D-glutamyl-meso-2,6-diaminopimeloyl-D-alanyl-D-alanine + di-trans,octa-cis-undecaprenyl phosphate = di-trans,octa-cis-undecaprenyl diphospho-N-acetyl-alpha-D-muramoyl-L-alanyl-D-glutamyl-meso-2,6-diaminopimeloyl-D-alanyl-D-alanine + UMP. It functions in the pathway cell wall biogenesis; peptidoglycan biosynthesis. Catalyzes the initial step of the lipid cycle reactions in the biosynthesis of the cell wall peptidoglycan: transfers peptidoglycan precursor phospho-MurNAc-pentapeptide from UDP-MurNAc-pentapeptide onto the lipid carrier undecaprenyl phosphate, yielding undecaprenyl-pyrophosphoryl-MurNAc-pentapeptide, known as lipid I. This chain is Phospho-N-acetylmuramoyl-pentapeptide-transferase, found in Vesicomyosocius okutanii subsp. Calyptogena okutanii (strain HA).